A 390-amino-acid polypeptide reads, in one-letter code: Glucose-fructose oxidoreductase domain-containing protein 1 (390 aa).

A signal peptide spans 1–21 (MLPGVGVFGTSLTSRVIIPLL). Asn-161, Asn-270, and Asn-354 each carry an N-linked (GlcNAc...) asparagine glycan.

The protein belongs to the Gfo/Idh/MocA family. Homodimer.

It localises to the secreted. Its function is as follows. Probably catalytically inactive enzyme. Does not bind NAD or NADP. In Xenopus tropicalis (Western clawed frog), this protein is Glucose-fructose oxidoreductase domain-containing protein 1 (gfod1).